A 344-amino-acid chain; its full sequence is N-acetyl-gamma-glutamyl-phosphate reductase (344 aa).

The active site involves C150.

This sequence belongs to the NAGSA dehydrogenase family. Type 1 subfamily.

The protein resides in the cytoplasm. It carries out the reaction N-acetyl-L-glutamate 5-semialdehyde + phosphate + NADP(+) = N-acetyl-L-glutamyl 5-phosphate + NADPH + H(+). It participates in amino-acid biosynthesis; L-arginine biosynthesis; N(2)-acetyl-L-ornithine from L-glutamate: step 3/4. Catalyzes the NADPH-dependent reduction of N-acetyl-5-glutamyl phosphate to yield N-acetyl-L-glutamate 5-semialdehyde. This is N-acetyl-gamma-glutamyl-phosphate reductase from Pseudomonas fluorescens (strain SBW25).